A 203-amino-acid chain; its full sequence is Translation initiation factor IF-3 (203 aa).

A compositionally biased stretch (basic and acidic residues) spans 172–182; sequence EAPKNEKKTKE. Residues 172–203 are disordered; it reads EAPKNEKKTKENNPPFNRINLMKGENHAKNED.

It belongs to the IF-3 family. Monomer.

The protein resides in the cytoplasm. Its function is as follows. IF-3 binds to the 30S ribosomal subunit and shifts the equilibrium between 70S ribosomes and their 50S and 30S subunits in favor of the free subunits, thus enhancing the availability of 30S subunits on which protein synthesis initiation begins. In Helicobacter pylori (strain J99 / ATCC 700824) (Campylobacter pylori J99), this protein is Translation initiation factor IF-3.